The sequence spans 175 residues: Apoptosis regulator Bcl-2 homolog (175 aa).

Positions 75-94 (QVLEDKINWGRIITIIAFCA) match the BH1 motif. Positions 105-120 (SPQYYDGIISEAITDA) match the BH2 motif.

Belongs to the Bcl-2 family. As to quaternary structure, interacts with host BAX; this interaction inhibits BAX oligomerization and subsequent activation. Interacts with host BAK1.

Its subcellular location is the host mitochondrion. Functionally, plays a role in the inhibition of host apoptosis by sequestering and inactivating multiple proapoptotic BCL-2 proteins, including BAK1 and BAX. This is Apoptosis regulator Bcl-2 homolog from Vertebrata (FPV).